A 165-amino-acid chain; its full sequence is Chorismate pyruvate-lyase (165 aa).

Met-35, Arg-77, Leu-115, and Glu-156 together coordinate substrate.

Belongs to the UbiC family. Monomer.

The protein localises to the cytoplasm. The catalysed reaction is chorismate = 4-hydroxybenzoate + pyruvate. It participates in cofactor biosynthesis; ubiquinone biosynthesis. Removes the pyruvyl group from chorismate, with concomitant aromatization of the ring, to provide 4-hydroxybenzoate (4HB) for the ubiquinone pathway. The polypeptide is Chorismate pyruvate-lyase (Salmonella arizonae (strain ATCC BAA-731 / CDC346-86 / RSK2980)).